Here is a 337-residue protein sequence, read N- to C-terminus: tRNA N6-adenosine threonylcarbamoyltransferase (337 aa).

Positions 111 and 115 each coordinate Fe cation. Substrate is bound by residues 134-138 (LVSGG), Asp-167, Gly-180, and Asn-272. Asp-300 contacts Fe cation.

Belongs to the KAE1 / TsaD family. Fe(2+) is required as a cofactor.

Its subcellular location is the cytoplasm. The catalysed reaction is L-threonylcarbamoyladenylate + adenosine(37) in tRNA = N(6)-L-threonylcarbamoyladenosine(37) in tRNA + AMP + H(+). In terms of biological role, required for the formation of a threonylcarbamoyl group on adenosine at position 37 (t(6)A37) in tRNAs that read codons beginning with adenine. Is involved in the transfer of the threonylcarbamoyl moiety of threonylcarbamoyl-AMP (TC-AMP) to the N6 group of A37, together with TsaE and TsaB. TsaD likely plays a direct catalytic role in this reaction. This chain is tRNA N6-adenosine threonylcarbamoyltransferase, found in Salmonella arizonae (strain ATCC BAA-731 / CDC346-86 / RSK2980).